Consider the following 346-residue polypeptide: Dynein regulatory complex protein 9 (346 aa).

The span at 299–308 (MEKEQREKNA) shows a compositional bias: basic and acidic residues. A disordered region spans residues 299 to 346 (MEKEQREKNAATKIQAWWRGTLVRKGPRSKKADKSKKKDGKKGKKKRK). Residues 305 to 334 (EKNAATKIQAWWRGTLVRKGPRSKKADKSK) enclose the IQ domain. Positions 323–346 (KGPRSKKADKSKKKDGKKGKKKRK) are enriched in basic residues.

This sequence belongs to the DRC9 family. In terms of assembly, component of the nexin-dynein regulatory complex (N-DRC). Interacts (via IQ domain) with calmodulin when calcium levels are low. Does not interact with calmodulin in the presence of Ca(2+). Interacts with hsp70 and may form a complex with camk4 and hsp70. Detected in adult testis, and at lower levels in brain, kidney and ovary.

Its subcellular location is the cytoplasm. It is found in the cell projection. It localises to the cilium. The protein localises to the flagellum. The protein resides in the cytoskeleton. Its subcellular location is the flagellum axoneme. Component of the nexin-dynein regulatory complex (N-DRC), a key regulator of ciliary/flagellar motility which maintains the alignment and integrity of the distal axoneme and regulates microtubule sliding in motile axonemes. Binds calmodulin when cellular Ca(2+) levels are low and thereby contributes to the regulation of calcium and calmodulin-dependent protein kinase IV (camk4) activity; contributes to the regulation of camk4 signaling cascades. Plays a role in the regulation of definitive hematopoiesis via its effects on camk4. This is Dynein regulatory complex protein 9 from Danio rerio (Zebrafish).